We begin with the raw amino-acid sequence, 339 residues long: Ferredoxin--NADP reductase (339 aa).

FAD contacts are provided by aspartate 36, glutamine 44, tyrosine 49, valine 89, phenylalanine 123, aspartate 290, and threonine 331.

This sequence belongs to the ferredoxin--NADP reductase type 2 family. Homodimer. It depends on FAD as a cofactor.

It catalyses the reaction 2 reduced [2Fe-2S]-[ferredoxin] + NADP(+) + H(+) = 2 oxidized [2Fe-2S]-[ferredoxin] + NADPH. In Acidiphilium cryptum (strain JF-5), this protein is Ferredoxin--NADP reductase.